Reading from the N-terminus, the 341-residue chain is Dihydroorotate dehydrogenase (quinone) (341 aa).

Residues 61–65 (AGLDK) and T85 each bind FMN. Residue K65 coordinates substrate. 110 to 114 (NRMGF) contributes to the substrate binding site. The FMN site is built by N138 and N171. N171 contacts substrate. S174 serves as the catalytic Nucleophile. Position 176 (N176) interacts with substrate. Residues K216 and T244 each contribute to the FMN site. 245–246 (NT) contacts substrate. FMN is bound by residues G267, G296, and 317–318 (YS).

It belongs to the dihydroorotate dehydrogenase family. Type 2 subfamily. As to quaternary structure, monomer. It depends on FMN as a cofactor.

The protein localises to the cell membrane. It carries out the reaction (S)-dihydroorotate + a quinone = orotate + a quinol. Its pathway is pyrimidine metabolism; UMP biosynthesis via de novo pathway; orotate from (S)-dihydroorotate (quinone route): step 1/1. In terms of biological role, catalyzes the conversion of dihydroorotate to orotate with quinone as electron acceptor. In Pseudomonas putida (strain W619), this protein is Dihydroorotate dehydrogenase (quinone).